The following is a 171-amino-acid chain: UPF0303 protein YPN_2129 (171 aa).

The protein belongs to the UPF0303 family.

This is UPF0303 protein YPN_2129 from Yersinia pestis bv. Antiqua (strain Nepal516).